The following is a 218-amino-acid chain: Adenylate kinase (218 aa).

G10 to T15 lines the ATP pocket. An NMP region spans residues S30–V59. AMP is bound by residues T31, R36, G57–V59, G85–R88, and Q92. The segment at G122–D159 is LID. ATP is bound by residues R123 and V132–Y133. AMP is bound by residues R156 and R167. G203 contacts ATP.

This sequence belongs to the adenylate kinase family. Monomer.

It is found in the cytoplasm. The enzyme catalyses AMP + ATP = 2 ADP. It functions in the pathway purine metabolism; AMP biosynthesis via salvage pathway; AMP from ADP: step 1/1. Functionally, catalyzes the reversible transfer of the terminal phosphate group between ATP and AMP. Plays an important role in cellular energy homeostasis and in adenine nucleotide metabolism. In Saccharophagus degradans (strain 2-40 / ATCC 43961 / DSM 17024), this protein is Adenylate kinase.